The following is a 321-amino-acid chain: uncharacterized protein (321 aa).

Residues 1–5 (MKQQA) are Cytoplasmic-facing. The helical transmembrane segment at 6-26 (GIGILLALTTAICWGALPIAM) threads the bilayer. One can recognise an EamA 1 domain in the interval 17 to 144 (ICWGALPIAM…LLSGLVMFFN (128 aa)). The Periplasmic portion of the chain corresponds to 27-35 (KQVLEVMEP). A helical transmembrane segment spans residues 36-56 (PTIVFYRFLMASIGLGAILAV). The Cytoplasmic segment spans residues 57–70 (KKRLPPLRVFRKPR). The helical transmembrane segment at 71 to 91 (WLILLAVATAGLFGNFILFSS) threads the bilayer. Over 92–99 (SLQYLSPT) the chain is Periplasmic. A helical transmembrane segment spans residues 100-120 (ASQVIGQLSPVGMMVASVFIL). Residues 121–130 (KEKMRSTQVV) lie on the Cytoplasmic side of the membrane. Residues 131–151 (GALMLLSGLVMFFNTSLVEIF) form a helical membrane-spanning segment. The Periplasmic segment spans residues 152–156 (TKLTD). The helical transmembrane segment at 157–177 (YTWGVIFGVGAATVWVSYGVA) threads the bilayer. The 124-residue stretch at 169–292 (TVWVSYGVAQ…GYLGAFVVVA (124 aa)) folds into the EamA 2 domain. The Cytoplasmic portion of the chain corresponds to 178–190 (QKVLLRRLASPQI). A helical membrane pass occupies residues 191-211 (LFLLYTLCTIALFPLAKPGVI). Residues 212 to 216 (AQLSH) lie on the Periplasmic side of the membrane. Residues 217-237 (WQLACLIFCGLNTLVGYGALA) form a helical membrane-spanning segment. The Cytoplasmic portion of the chain corresponds to 238-249 (EAMARWQAAQVS). A helical membrane pass occupies residues 250–270 (AIITLTPLFTLFFSDLLSLAW). The Periplasmic portion of the chain corresponds to 271–278 (PDFFARPM). A helical membrane pass occupies residues 279–299 (LNLLGYLGAFVVVAGAMYSAI). At 300–321 (GHRIWGGLRKHTTVVSQPRAGE) the chain is on the cytoplasmic side.

This sequence belongs to the EamA transporter family.

The protein resides in the cell inner membrane. This is an uncharacterized protein from Escherichia coli O157:H7.